A 470-amino-acid chain; its full sequence is tRNA modification GTPase MnmE (470 aa).

Lys-27, Glu-90, and Arg-129 together coordinate (6S)-5-formyl-5,6,7,8-tetrahydrofolate. The TrmE-type G domain maps to 231–391 (GVSLVLAGKP…LRDFLNQRFL (161 aa)). GTP is bound by residues 241–246 (NVGKSS), 260–266 (TPFPGTT), and 285–288 (DTAG). Mg(2+) contacts are provided by Ser-245 and Thr-266. Lys-470 provides a ligand contact to (6S)-5-formyl-5,6,7,8-tetrahydrofolate.

The protein belongs to the TRAFAC class TrmE-Era-EngA-EngB-Septin-like GTPase superfamily. TrmE GTPase family. As to quaternary structure, homodimer. Heterotetramer of two MnmE and two MnmG subunits. K(+) serves as cofactor.

It is found in the cytoplasm. In terms of biological role, exhibits a very high intrinsic GTPase hydrolysis rate. Involved in the addition of a carboxymethylaminomethyl (cmnm) group at the wobble position (U34) of certain tRNAs, forming tRNA-cmnm(5)s(2)U34. This chain is tRNA modification GTPase MnmE, found in Syntrophobacter fumaroxidans (strain DSM 10017 / MPOB).